A 148-amino-acid polypeptide reads, in one-letter code: Caltractin (148 aa).

4 consecutive EF-hand domains span residues 4 to 39 (EQKQ…LGFE), 40 to 75 (PKKE…KMGE), 77 to 112 (DSRE…LGEN), and 113 to 148 (MTDE…TSLF). Positions 17, 19, 21, 23, 28, 53, 55, 57, 59, and 64 each coordinate Ca(2+). 5 residues coordinate Ca(2+): Asp-126, Asp-128, Asp-130, Glu-132, and Glu-137.

This sequence belongs to the centrin family. As to expression, ubiquitous.

Its function is as follows. This calcium-binding protein is found in the basal body complexes (the functional homolog of the centrosome in animal cell). In mitotic cells it is specifically associated with the poles of the mitotic spindles at the sites of the duplicated basal body complexes. This chain is Caltractin, found in Tetraselmis striata (Green microalga).